The sequence spans 569 residues: Alpha-keto-acid decarboxylase (569 aa).

E57 lines the thiamine diphosphate pocket. Positions 392 to 474 (TAFYGMVEHR…VVVNNDGYTI (83 aa)) are thiamine pyrophosphate binding. Positions 442, 469, and 471 each coordinate Mg(2+).

The protein belongs to the TPP enzyme family. A metal cation is required as a cofactor. It depends on thiamine diphosphate as a cofactor.

Decarboxylates branched-chain and aromatic alpha-keto acids to aldehydes. The chain is Alpha-keto-acid decarboxylase (kdc) from Mycobacterium leprae (strain TN).